Here is a 329-residue protein sequence, read N- to C-terminus: Sulfate/thiosulfate import ATP-binding protein CysA (329 aa).

In terms of domain architecture, ABC transporter spans 3 to 237 (IEIRNVSKNF…PASDFVYHFL (235 aa)). 35-42 (GPSGCGKT) contacts ATP.

This sequence belongs to the ABC transporter superfamily. Sulfate/tungstate importer (TC 3.A.1.6) family. In terms of assembly, the complex is composed of two ATP-binding proteins (CysA), two transmembrane proteins (CysT and CysW) and a solute-binding protein (CysP).

Its subcellular location is the cell inner membrane. The catalysed reaction is sulfate(out) + ATP + H2O = sulfate(in) + ADP + phosphate + H(+). The enzyme catalyses thiosulfate(out) + ATP + H2O = thiosulfate(in) + ADP + phosphate + H(+). In terms of biological role, part of the ABC transporter complex CysAWTP involved in sulfate/thiosulfate import. Responsible for energy coupling to the transport system. The chain is Sulfate/thiosulfate import ATP-binding protein CysA from Pseudomonas aeruginosa (strain ATCC 15692 / DSM 22644 / CIP 104116 / JCM 14847 / LMG 12228 / 1C / PRS 101 / PAO1).